A 351-amino-acid polypeptide reads, in one-letter code: Phospho-N-acetylmuramoyl-pentapeptide-transferase (351 aa).

10 helical membrane passes run 17 to 37, 63 to 83, 85 to 105, 124 to 144, 158 to 178, 190 to 210, 230 to 250, 254 to 274, 279 to 299, and 328 to 348; these read TAYA…FIIL, IPTM…FFWI, FWNI…CLGF, FKIY…YYFG, SLKL…LISA, GLAI…AYLA, LVVF…FNAY, IMMG…TALI, ILFA…IIQV, and QVVI…LSTL.

This sequence belongs to the glycosyltransferase 4 family. MraY subfamily. Mg(2+) serves as cofactor.

The protein localises to the cell inner membrane. The enzyme catalyses UDP-N-acetyl-alpha-D-muramoyl-L-alanyl-gamma-D-glutamyl-meso-2,6-diaminopimeloyl-D-alanyl-D-alanine + di-trans,octa-cis-undecaprenyl phosphate = di-trans,octa-cis-undecaprenyl diphospho-N-acetyl-alpha-D-muramoyl-L-alanyl-D-glutamyl-meso-2,6-diaminopimeloyl-D-alanyl-D-alanine + UMP. The protein operates within cell wall biogenesis; peptidoglycan biosynthesis. In terms of biological role, catalyzes the initial step of the lipid cycle reactions in the biosynthesis of the cell wall peptidoglycan: transfers peptidoglycan precursor phospho-MurNAc-pentapeptide from UDP-MurNAc-pentapeptide onto the lipid carrier undecaprenyl phosphate, yielding undecaprenyl-pyrophosphoryl-MurNAc-pentapeptide, known as lipid I. In Borrelia turicatae (strain 91E135), this protein is Phospho-N-acetylmuramoyl-pentapeptide-transferase.